The following is a 119-amino-acid chain: uncharacterized protein (119 aa).

Cys9 and Cys12 are disulfide-bonded.

The protein belongs to the ArsC family.

This is an uncharacterized protein from Streptomyces viridochromogenes.